Consider the following 491-residue polypeptide: Probable CtpA-like serine protease (491 aa).

Residues 1–22 (MNDHQKNHATSQDDNTKSTPSK) are disordered. The span at 8–22 (HATSQDDNTKSTPSK) shows a compositional bias: polar residues. A helical membrane pass occupies residues 31 to 51 (LWHFILVILGIILLTSIITVV). The 83-residue stretch at 119-201 (TKQFNEGVSG…TYVTLTIKRG (83 aa)) folds into the PDZ domain. Residues serine 324, aspartate 335, and lysine 349 each act as charge relay system in the active site.

Belongs to the peptidase S41A family.

The protein resides in the cell membrane. This is Probable CtpA-like serine protease from Staphylococcus epidermidis (strain ATCC 12228 / FDA PCI 1200).